Reading from the N-terminus, the 342-residue chain is Probable dual-specificity RNA methyltransferase RlmN (342 aa).

Residue Glu91 is the Proton acceptor of the active site. The 231-residue stretch at 97-327 (YKHGNSICVS…TTIRREMGAD (231 aa)) folds into the Radical SAM core domain. Cys104 and Cys332 are joined by a disulfide. 3 residues coordinate [4Fe-4S] cluster: Cys111, Cys115, and Cys118. S-adenosyl-L-methionine contacts are provided by residues 158–159 (GE), Ser190, 213–215 (SLH), and Asn289. The active-site S-methylcysteine intermediate is Cys332.

It belongs to the radical SAM superfamily. RlmN family. [4Fe-4S] cluster is required as a cofactor.

It localises to the cytoplasm. It catalyses the reaction adenosine(2503) in 23S rRNA + 2 reduced [2Fe-2S]-[ferredoxin] + 2 S-adenosyl-L-methionine = 2-methyladenosine(2503) in 23S rRNA + 5'-deoxyadenosine + L-methionine + 2 oxidized [2Fe-2S]-[ferredoxin] + S-adenosyl-L-homocysteine. It carries out the reaction adenosine(37) in tRNA + 2 reduced [2Fe-2S]-[ferredoxin] + 2 S-adenosyl-L-methionine = 2-methyladenosine(37) in tRNA + 5'-deoxyadenosine + L-methionine + 2 oxidized [2Fe-2S]-[ferredoxin] + S-adenosyl-L-homocysteine. Specifically methylates position 2 of adenine 2503 in 23S rRNA and position 2 of adenine 37 in tRNAs. In Clostridium botulinum (strain Langeland / NCTC 10281 / Type F), this protein is Probable dual-specificity RNA methyltransferase RlmN.